Here is a 595-residue protein sequence, read N- to C-terminus: GPI mannosyltransferase 3 (595 aa).

A run of 10 helical transmembrane segments spans residues 58–78 (YAFPMLFEMSYYVAWILGVAT), 85–105 (LAHATALCGAVVPSGAAGVAA), 128–148 (GPRVVMAAVAACGEFYSVLLV), 185–207 (FFATRTFINSFEMTLTAVALYHW), 212–232 (GLDVGSLGFSASLAVAAFACL), 235–255 (PTNVLIWAVLGLFLVLNLVRS), 260–280 (LLLTLVAKVAAAGALAVCANI), 289–309 (GVLLPLLRFIEFNVTTPLAAF), 319–339 (LLQSVPLIVGYALPFFVGALL), and 413–433 (VQSLLYVLPVLSITAALVLNT).

This sequence belongs to the glycosyltransferase 22 family. PIGB subfamily.

The protein resides in the endoplasmic reticulum membrane. Its pathway is glycolipid biosynthesis; glycosylphosphatidylinositol-anchor biosynthesis. Functionally, mannosyltransferase involved in glycosylphosphatidylinositol-anchor biosynthesis. Transfers the third mannose to Man2-GlcN-acyl-PI during GPI precursor assembly. In Eremothecium gossypii (strain ATCC 10895 / CBS 109.51 / FGSC 9923 / NRRL Y-1056) (Yeast), this protein is GPI mannosyltransferase 3 (GPI10).